Reading from the N-terminus, the 293-residue chain is GDT1-like protein 3 (293 aa).

An N-terminal signal peptide occupies residues 1–25 (MGLISNPTRLILVATIFFLVSSISG). The next 6 membrane-spanning stretches (helical) occupy residues 89 to 109 (FSMI…ALMA), 115 to 135 (ATVL…STGL), 148 to 168 (TNSA…YIAW), 200 to 220 (LFSR…FLAE), 238 to 258 (AIGV…LAVV), and 272 to 292 (VATV…FYPP).

Belongs to the GDT1 family.

It is found in the membrane. In Arabidopsis thaliana (Mouse-ear cress), this protein is GDT1-like protein 3.